The following is a 293-amino-acid chain: Small ribosomal subunit biogenesis GTPase RsgA (293 aa).

The 161-residue stretch at 63–223 (KNELVRPPIA…VADTPGFSSL (161 aa)) folds into the CP-type G domain. GTP contacts are provided by residues 112–115 (SKMD) and 166–174 (GQSGVGKSS). Residues cysteine 247, cysteine 252, histidine 254, and cysteine 260 each coordinate Zn(2+).

The protein belongs to the TRAFAC class YlqF/YawG GTPase family. RsgA subfamily. Monomer. Associates with 30S ribosomal subunit, binds 16S rRNA. The cofactor is Zn(2+).

It is found in the cytoplasm. Functionally, one of several proteins that assist in the late maturation steps of the functional core of the 30S ribosomal subunit. Helps release RbfA from mature subunits. May play a role in the assembly of ribosomal proteins into the subunit. Circularly permuted GTPase that catalyzes slow GTP hydrolysis, GTPase activity is stimulated by the 30S ribosomal subunit. The chain is Small ribosomal subunit biogenesis GTPase RsgA from Bacillus cereus (strain ATCC 14579 / DSM 31 / CCUG 7414 / JCM 2152 / NBRC 15305 / NCIMB 9373 / NCTC 2599 / NRRL B-3711).